Consider the following 345-residue polypeptide: Meiotic recombination protein rec12 (345 aa).

The Topo IIA-type catalytic domain maps to 5-137 (DKKKVVRSWI…LNVEASAKGL (133 aa)). The active-site O-(5'-phospho-DNA)-tyrosine intermediate is Y98. 2 residues coordinate Mg(2+): E179 and D229.

This sequence belongs to the TOP6A family. In terms of assembly, component of the DSB catalytic core (DSBC) complex, composed of at least rec12, rec6 and rec14. The complex interacts with mde2. It depends on Mg(2+) as a cofactor.

The protein localises to the cytoplasm. The protein resides in the nucleus. The catalysed reaction is ATP-dependent breakage, passage and rejoining of double-stranded DNA.. In terms of biological role, required for formation of the double-strand breaks (DSBs) that initiate meiotic recombination. Required for crossover recombination and chiasmatic segregation of chromosomes during meiosis I. Also involved in the faithful equational segregation of chromosomes during meiosis II. In Schizosaccharomyces pombe (strain 972 / ATCC 24843) (Fission yeast), this protein is Meiotic recombination protein rec12.